We begin with the raw amino-acid sequence, 295 residues long: Phosphoribosylaminoimidazole-succinocarboxamide synthase (295 aa).

Belongs to the SAICAR synthetase family.

It catalyses the reaction 5-amino-1-(5-phospho-D-ribosyl)imidazole-4-carboxylate + L-aspartate + ATP = (2S)-2-[5-amino-1-(5-phospho-beta-D-ribosyl)imidazole-4-carboxamido]succinate + ADP + phosphate + 2 H(+). The protein operates within purine metabolism; IMP biosynthesis via de novo pathway; 5-amino-1-(5-phospho-D-ribosyl)imidazole-4-carboxamide from 5-amino-1-(5-phospho-D-ribosyl)imidazole-4-carboxylate: step 1/2. In Desulforapulum autotrophicum (strain ATCC 43914 / DSM 3382 / VKM B-1955 / HRM2) (Desulfobacterium autotrophicum), this protein is Phosphoribosylaminoimidazole-succinocarboxamide synthase.